Here is a 647-residue protein sequence, read N- to C-terminus: RAF proto-oncogene serine/threonine-protein kinase (647 aa).

At S43 the chain carries Phosphoserine. The region spanning 56–131 is the RBD domain; that stretch reads NTIRVFLPNK…IGEELQVDFL (76 aa). Residues 138–184 form a Phorbol-ester/DAG-type zinc finger; the sequence is THNFARKTFLKLAFCDICQKFLLNGFRCQTCGYKFHEHCSTKVPTMC. 2 disordered regions span residues 236–269 and 284–334; these read HVFTFNTSNPSSEGTLSQRQRSTSTPNVHMVSTT and HSES…RPRG. A compositionally biased stretch (polar residues) spans 239 to 269; that stretch reads TFNTSNPSSEGTLSQRQRSTSTPNVHMVSTT. S259 carries the post-translational modification Phosphoserine. T268 is modified (phosphothreonine; by autocatalysis). Residues 286 to 297 show a composition bias toward low complexity; that stretch reads ESASPSALSGSP. Residues 298-309 are compositionally biased toward polar residues; sequence NNMSPTGWSQPK. S338 is modified (phosphoserine). In terms of domain architecture, Protein kinase spans 349–609; it reads VMLSTRIGSG…PQILSSIELL (261 aa). ATP-binding positions include 355-363 and K375; that span reads IGSGSFGTV. D468 acts as the Proton acceptor in catalysis. A phosphoserine mark is found at S499 and S621.

The protein belongs to the protein kinase superfamily. TKL Ser/Thr protein kinase family. RAF subfamily. In terms of processing, phosphorylation at Ser-259 inactivates kinase activity. Dephosphorylation of Ser-259 by a complex containing protein phosphatase 1 relieves inactivation, leading to stimulate RAF1 activity. Isoform 1 was present in all tissues tested: skeletal muscle, intestine, brain, gizzard, heart, lung, kidney, bone marrow, spleen and bursa of Fabricius. Isoform 2 was only detected in brain, heart and skeletal muscle. In brain and heart isoform 1 is more abundant than isoform 2. In skeletal muscle isoform 2 is more abundant than isoform 1.

It localises to the cytoplasm. The protein localises to the cell membrane. The catalysed reaction is L-seryl-[protein] + ATP = O-phospho-L-seryl-[protein] + ADP + H(+). It catalyses the reaction L-threonyl-[protein] + ATP = O-phospho-L-threonyl-[protein] + ADP + H(+). In terms of biological role, serine/threonine-protein kinase that acts as a regulatory link between the membrane-associated Ras GTPases and the MAPK/ERK cascade, and this critical regulatory link functions as a switch determining cell fate decisions. RAF1 activation initiates a mitogen-activated protein kinase (MAPK) cascade that comprises a sequential phosphorylation of the dual-specific MAPK kinases (MAP2K1/MEK1 and MAP2K2/MEK2) and the extracellular signal-regulated kinases (MAPK3/ERK1 and MAPK1/ERK2). The chain is RAF proto-oncogene serine/threonine-protein kinase (RAF1) from Gallus gallus (Chicken).